The primary structure comprises 759 residues: Xaa-Pro dipeptidyl-peptidase (759 aa).

Residues Ser-347, Asp-467, and His-497 each act as charge relay system in the active site.

The protein belongs to the peptidase S15 family. In terms of assembly, homodimer.

It localises to the secreted. It catalyses the reaction Hydrolyzes Xaa-Pro-|- bonds to release unblocked, N-terminal dipeptides from substrates including Ala-Pro-|-p-nitroanilide and (sequentially) Tyr-Pro-|-Phe-Pro-|-Gly-Pro-|-Ile.. Its function is as follows. Removes N-terminal dipeptides sequentially from polypeptides having unsubstituted N-termini provided that the penultimate residue is proline. The polypeptide is Xaa-Pro dipeptidyl-peptidase (pepX) (Streptococcus gordonii).